The primary structure comprises 406 residues: LIM/homeobox protein Lhx2 (406 aa).

2 consecutive LIM zinc-binding domains span residues 53-105 and 115-168; these read CAGC…CKED and CARC…CRLH. A disordered region spans residues 250-270; sequence DAEHLDRDQPYPSSQKTKRMR. Residues 266-325 constitute a DNA-binding region (homeobox); the sequence is TKRMRTSFKHHQLRTMKSYFAINHNPDAKDLKQLAQKTGLTKRVLQVWFQNARAKFRRNL. The Nuclear localization signal motif lies at 307 to 323; it reads KRVLQVWFQNARAKFRR. The segment covering 328 to 356 has biased composition (polar residues); sequence QENTGVDKTSDATLQTGTPSGPASELSNA. Disordered stretches follow at residues 328 to 375 and 387 to 406; these read QENT…SPTL and GNLEGHEPHSPSQTTLTNLF. The segment covering 357 to 375 has biased composition (low complexity); the sequence is SLSPSSTPTTLTDLTSPTL. Polar residues predominate over residues 396 to 406; that stretch reads SPSQTTLTNLF.

Interacts (via LIM domains) with CITED2. Interacts with POU4F2 isoform 1.

The protein localises to the nucleus. In terms of biological role, acts as a transcriptional activator. Stimulates the promoter of the alpha-glycoprotein gene. Transcriptional regulatory protein involved in the control of cell differentiation in developing lymphoid and neural cell types. The sequence is that of LIM/homeobox protein Lhx2 (Lhx2) from Mus musculus (Mouse).